Reading from the N-terminus, the 200-residue chain is Glycerol-3-phosphate acyltransferase (200 aa).

The next 5 helical transmembrane spans lie at 2-22, 51-71, 84-104, 114-134, and 159-179; these read FNIP…AVIV, KAAV…VLLA, AIAA…FFGF, LGVL…IWLV, and FFMP…LVLF.

The protein belongs to the PlsY family. As to quaternary structure, probably interacts with PlsX.

Its subcellular location is the cell inner membrane. It carries out the reaction an acyl phosphate + sn-glycerol 3-phosphate = a 1-acyl-sn-glycero-3-phosphate + phosphate. It participates in lipid metabolism; phospholipid metabolism. Functionally, catalyzes the transfer of an acyl group from acyl-phosphate (acyl-PO(4)) to glycerol-3-phosphate (G3P) to form lysophosphatidic acid (LPA). This enzyme utilizes acyl-phosphate as fatty acyl donor, but not acyl-CoA or acyl-ACP. This chain is Glycerol-3-phosphate acyltransferase, found in Neisseria meningitidis serogroup C / serotype 2a (strain ATCC 700532 / DSM 15464 / FAM18).